The chain runs to 365 residues: Peptide chain release factor 1 (365 aa).

The residue at position 240 (Gln-240) is an N5-methylglutamine.

This sequence belongs to the prokaryotic/mitochondrial release factor family. Methylated by PrmC. Methylation increases the termination efficiency of RF1.

The protein resides in the cytoplasm. Its function is as follows. Peptide chain release factor 1 directs the termination of translation in response to the peptide chain termination codons UAG and UAA. This Bifidobacterium animalis subsp. lactis (strain AD011) protein is Peptide chain release factor 1.